Reading from the N-terminus, the 383-residue chain is Forkhead box protein I3-B (383 aa).

A compositionally biased stretch (polar residues) spans 1–12 (MTSYESQGQSPT). 3 disordered regions span residues 1 to 55 (MTSY…YELG), 215 to 277 (DNGN…PCLS), and 317 to 348 (TTGFSTFTPSTTVSDWASPLPPPPPMSSSPSH). The span at 25–35 (PPELSLYSDSY) shows a compositional bias: low complexity. Residues 130-224 (RPPYSYSALI…DNGNFRRKRK (95 aa)) constitute a DNA-binding region (fork-head). Residues 220 to 226 (RRKRKRK) carry the Nuclear localization signal motif. The span at 234–249 (SSSGGNESGDSNGRGS) shows a compositional bias: low complexity. Residues 250–277 (PKSQSIDISTSPEKGPSPASTGPSPCLS) are compositionally biased toward polar residues. Over residues 317–330 (TTGFSTFTPSTTVS) the composition is skewed to low complexity.

As to expression, expressed in ionocyte precursors.

It localises to the nucleus. Its function is as follows. Transcription factor required for epithelial cell differentiation. Involved in specification of skin ionocytes from epidermal precursors. The sequence is that of Forkhead box protein I3-B from Danio rerio (Zebrafish).